Reading from the N-terminus, the 471-residue chain is MPN domain-containing protein (471 aa).

Over residues 1–10 the composition is skewed to low complexity; it reads MAAPEPLSPA. The interval 1–63 is disordered; that stretch reads MAAPEPLSPA…GGGGAGAGGC (63 aa). Position 2 is an N-acetylalanine (Ala-2). At Ser-8 the chain carries Phosphoserine. Residues 16 to 29 are compositionally biased toward acidic residues; it reads EAPEEDEDEAEAED. The span at 36 to 63 shows a compositional bias: gly residues; that stretch reads GAGGGRSGGGGSSVSGGGGGGGAGAGGC. The RAMA domain maps to 71–166; that stretch reads TRRAVTLRVL…KYKATWLRLH (96 aa). DNA is bound by residues Ser-123, Ser-125, and Trp-145. Positions 170 to 229 are disordered; sequence TPATAADESPASEGEEEELLMEEEEEDVLAGVSAEDKSRRPLGKSPSEPAHPEATTPGKR. Residues Ser-178 and Ser-181 each carry the phosphoserine modification. Residues 182–197 show a composition bias toward acidic residues; the sequence is EGEEEELLMEEEEEDV. The 136-residue stretch at 272 to 407 folds into the MPN domain; it reads VAVSSNVLFL…PESKISPFWV (136 aa). Positions 349, 351, and 362 each coordinate Zn(2+). The JAMM motif motif lies at 349-362; sequence HSHPHSPALPSLQD.

Belongs to the peptidase M67 family. In terms of assembly, monomer. Mainly monomoric, but when binds to dsDNA, forms homotetramer assembled into two homodimers. May interact with histones; this interaction is facilitated by dsDNA binding. Degraded following binding to N(6)-methyladenosine methylated DNA (m6A).

In terms of biological role, probable protease. Acts as a sensor of N(6)-methyladenosine methylation on DNA (m6A): recognizes and binds m6A DNA, leading to its degradation. Binds only double strand DNA (dsDNA) in a sequence-independent manner. This Homo sapiens (Human) protein is MPN domain-containing protein.